The sequence spans 140 residues: ATP synthase epsilon chain (140 aa).

This sequence belongs to the ATPase epsilon chain family. In terms of assembly, F-type ATPases have 2 components, CF(1) - the catalytic core - and CF(0) - the membrane proton channel. CF(1) has five subunits: alpha(3), beta(3), gamma(1), delta(1), epsilon(1). CF(0) has three main subunits: a, b and c.

The protein resides in the cell inner membrane. Functionally, produces ATP from ADP in the presence of a proton gradient across the membrane. In Alkalilimnicola ehrlichii (strain ATCC BAA-1101 / DSM 17681 / MLHE-1), this protein is ATP synthase epsilon chain.